Reading from the N-terminus, the 147-residue chain is Hemoglobin subunit beta-A/B (147 aa).

Residues 2 to 147 (EWTDAERSAI…VVNALKRQYH (146 aa)) enclose the Globin domain. Positions 63 and 92 each coordinate heme b.

Belongs to the globin family. As to quaternary structure, heterotetramer of two alpha chains and two beta chains. In terms of tissue distribution, red blood cells.

Its function is as follows. Involved in oxygen transport from gills to the various peripheral tissues. In Cyprinus carpio (Common carp), this protein is Hemoglobin subunit beta-A/B.